Reading from the N-terminus, the 385-residue chain is 4-hydroxy-3-methylbut-2-en-1-yl diphosphate synthase (flavodoxin) 2 (385 aa).

[4Fe-4S] cluster-binding residues include cysteine 281, cysteine 284, cysteine 316, and glutamate 323.

This sequence belongs to the IspG family. [4Fe-4S] cluster is required as a cofactor.

The catalysed reaction is (2E)-4-hydroxy-3-methylbut-2-enyl diphosphate + oxidized [flavodoxin] + H2O + 2 H(+) = 2-C-methyl-D-erythritol 2,4-cyclic diphosphate + reduced [flavodoxin]. It participates in isoprenoid biosynthesis; isopentenyl diphosphate biosynthesis via DXP pathway; isopentenyl diphosphate from 1-deoxy-D-xylulose 5-phosphate: step 5/6. Its function is as follows. Converts 2C-methyl-D-erythritol 2,4-cyclodiphosphate (ME-2,4cPP) into 1-hydroxy-2-methyl-2-(E)-butenyl 4-diphosphate. The sequence is that of 4-hydroxy-3-methylbut-2-en-1-yl diphosphate synthase (flavodoxin) 2 from Streptomyces avermitilis (strain ATCC 31267 / DSM 46492 / JCM 5070 / NBRC 14893 / NCIMB 12804 / NRRL 8165 / MA-4680).